The primary structure comprises 207 residues: ATP-dependent Clp protease proteolytic subunit (207 aa).

Residue Ser-111 is the Nucleophile of the active site. His-136 is a catalytic residue.

The protein belongs to the peptidase S14 family. Fourteen ClpP subunits assemble into 2 heptameric rings which stack back to back to give a disk-like structure with a central cavity, resembling the structure of eukaryotic proteasomes.

It is found in the cytoplasm. It catalyses the reaction Hydrolysis of proteins to small peptides in the presence of ATP and magnesium. alpha-casein is the usual test substrate. In the absence of ATP, only oligopeptides shorter than five residues are hydrolyzed (such as succinyl-Leu-Tyr-|-NHMec, and Leu-Tyr-Leu-|-Tyr-Trp, in which cleavage of the -Tyr-|-Leu- and -Tyr-|-Trp bonds also occurs).. Cleaves peptides in various proteins in a process that requires ATP hydrolysis. Has a chymotrypsin-like activity. Plays a major role in the degradation of misfolded proteins. The polypeptide is ATP-dependent Clp protease proteolytic subunit (Aeromonas salmonicida (strain A449)).